The sequence spans 214 residues: tRNA (guanine-N(7)-)-methyltransferase (214 aa).

Residues E44, E69, D96, and D118 each coordinate S-adenosyl-L-methionine. The active site involves D118. Residues K122, D154, and 191 to 194 contribute to the substrate site; that span reads TEYE.

It belongs to the class I-like SAM-binding methyltransferase superfamily. TrmB family.

The enzyme catalyses guanosine(46) in tRNA + S-adenosyl-L-methionine = N(7)-methylguanosine(46) in tRNA + S-adenosyl-L-homocysteine. Its pathway is tRNA modification; N(7)-methylguanine-tRNA biosynthesis. In terms of biological role, catalyzes the formation of N(7)-methylguanine at position 46 (m7G46) in tRNA. This is tRNA (guanine-N(7)-)-methyltransferase from Listeria innocua serovar 6a (strain ATCC BAA-680 / CLIP 11262).